The chain runs to 805 residues: Shutoff protein (805 aa).

The segment at 1 to 88 (MESVEKEDSL…QVGRGDQRHG (88 aa)) is disordered. The segment covering 18-29 (TTASTDAANAPT) has biased composition (polar residues). Basic and acidic residues-rich tracts occupy residues 59–70 (RSVPTEDKKQDQ) and 79–88 (QVGRGDQRHG). The binding to host EIF4G stretch occupies residues 280–345 (VMSELIVRRA…AVLVTVELEC (66 aa)). Residues 348 to 466 (RFFADPEMQR…DLWTAFNERS (119 aa)) form the RRM domain. Phosphotyrosine; by host is present on residues Tyr365 and Tyr682. Residues 684-805 (DPQSGEELNP…AGTACSPTQP (122 aa)) are disordered. Residues 726–742 (GRGGILGQSGRGGFGRG) are compositionally biased toward gly residues. A compositionally biased stretch (basic residues) spans 754–763 (RSFRGRRGVR).

It belongs to the adenoviridae shutoff protein family. Monomer. Interacts with hexon protein; this interaction allows chaperoning and trimerization of hexon proteins. Interacts (via N-terminus) with host initiation factor EIF4G (via C-terminus). Interacts (via RRM domain) with viral mRNAs that contain the tripartite leader; this interaction allows ribosome shunting and expression of viral late mRNAs. In terms of processing, might be cleaved by the viral protease. Phosphorylated. Tyrosine phosphorylation enhances preferential binding to tripartite leader mRNAs and allows ribosome shunting. Post-translationally, methylated. Asymmetric dimethylation by host PRMT1 of the Arg/Gly-rich region may regulate shutoff protein binding to hexon and promote the capsid assembly in the nucleus.

The protein localises to the host cytoplasm. Functionally, protein that inhibits host translation while promoting late viral translation by ribosome shunting. Blocks host cap-dependent translation by binding to eIF4G, displacing MKNK1 from cap initiation complexes and preventing EIF4E phosphorylation. Binds to the tripartite leader sequence of viral late mRNAs and recruits host eIF4G, PABPC1/poly-A binding protein and 40S ribosomes subunits on viral mRNAs, allowing ribosome shunting and efficient translation of late viral mRNAs even though conventional translation via ribosome scanning from the cap has been shut off in the host cell. During assembly, acts as a chaperone protein that helps hexon proteins assembly into trimers. The chain is Shutoff protein from Homo sapiens (Human).